Consider the following 377-residue polypeptide: MTKKRVALIFGGNSSEHDVSKRSAQNFYNAIEATGKYEIIVFAIAQNGFFLDTESSKKILALEDEQPIVDAFMKTVDASDPLARIHALKSAGDFDIFFPVVHGNLGEDGTLQGLFKLLDKPYVGAPLRGHAVSFDKALTKELLTVNGIRNTKYIVVDPESANNWSWDKIVAELGNIVFVKAANQGSSVGISRVTNAEEYTEALSDSFQYDYKVLIEEAVNGARELEVGVIGNDQPLVSEIGAHTVPNQGSGDGWYDYNNKFVDNSAVHFEIPAQLSPEVTKEVKQMALDAYKVLNLRGEARMDFLLDENNVPYLGEPNTLPGFTNMSLFKRLWDYSDINNAKLVDMLIDYGFEDFAQNKKLSYSFVSLGEEKIGKFN.

Residues 140-349 (KELLTVNGIR…NAKLVDMLID (210 aa)) form the ATP-grasp domain. ATP is bound at residue 170-225 (VAELGNIVFVKAANQGSSVGISRVTNAEEYTEALSDSFQYDYKVLIEEAVNGAREL). The Mg(2+) site is built by aspartate 303, glutamate 316, and asparagine 318.

The protein belongs to the D-alanine--D-alanine ligase family. Mg(2+) serves as cofactor. It depends on Mn(2+) as a cofactor.

It localises to the cytoplasm. It catalyses the reaction 2 D-alanine + ATP = D-alanyl-D-alanine + ADP + phosphate + H(+). It participates in cell wall biogenesis; peptidoglycan biosynthesis. In terms of biological role, cell wall formation. This chain is D-alanine--D-alanine ligase, found in Leuconostoc mesenteroides subsp. mesenteroides (strain ATCC 8293 / DSM 20343 / BCRC 11652 / CCM 1803 / JCM 6124 / NCDO 523 / NBRC 100496 / NCIMB 8023 / NCTC 12954 / NRRL B-1118 / 37Y).